Here is a 215-residue protein sequence, read N- to C-terminus: LysM and putative peptidoglycan-binding domain-containing protein 2 (215 aa).

A disordered region spans residues 1 to 40 (MADSSPAPSLRAGGPREPRPSAPSPPPPHSRLGSEAEEAE). Residue Ala2 is modified to N-acetylalanine. Ser5, Ser24, Ser34, and Ser58 each carry phosphoserine. Over residues 20-29 (PSAPSPPPPH) the composition is skewed to pro residues. Positions 72-116 (VEHRVRAGDTLQGIALKYGVSMEQIKRANKLFTNDCIFLKKTLNI) constitute a LysM domain. Positions 194-215 (AKKLKGESRDEEGLYTASLYHS) are disordered.

The protein is LysM and putative peptidoglycan-binding domain-containing protein 2 (LYSMD2) of Bos taurus (Bovine).